Here is a 359-residue protein sequence, read N- to C-terminus: Membrane-bound lytic murein transglycosylase C (359 aa).

The signal sequence occupies residues 1 to 16 (MKKYLALALIAPLLIS). The N-palmitoyl cysteine moiety is linked to residue Cys-17. Cys-17 is lipidated: S-diacylglycerol cysteine.

Belongs to the transglycosylase Slt family.

Its subcellular location is the cell outer membrane. The enzyme catalyses Exolytic cleavage of the (1-&gt;4)-beta-glycosidic linkage between N-acetylmuramic acid (MurNAc) and N-acetylglucosamine (GlcNAc) residues in peptidoglycan, from either the reducing or the non-reducing ends of the peptidoglycan chains, with concomitant formation of a 1,6-anhydrobond in the MurNAc residue.. In terms of biological role, murein-degrading enzyme. May play a role in recycling of muropeptides during cell elongation and/or cell division. This Escherichia coli (strain SMS-3-5 / SECEC) protein is Membrane-bound lytic murein transglycosylase C.